Here is a 91-residue protein sequence, read N- to C-terminus: MPRSLKKGPFIDLHLLKKVEAAVEKNDRRPIKTWSRRSTIFPDFVGLTIAVHNGRQHVPVLVTEDMVGHKLGEFAPTRTYRGHAADKKAKR.

It belongs to the universal ribosomal protein uS19 family.

Its function is as follows. Protein S19 forms a complex with S13 that binds strongly to the 16S ribosomal RNA. In Marinomonas sp. (strain MWYL1), this protein is Small ribosomal subunit protein uS19.